A 368-amino-acid polypeptide reads, in one-letter code: Molybdenum import ATP-binding protein ModC (368 aa).

The region spanning Met-1–Ser-230 is the ABC transporter domain. Gly-32–Thr-39 lines the ATP pocket. In terms of domain architecture, Mop spans Ala-291–Asp-362.

It belongs to the ABC transporter superfamily. Molybdate importer (TC 3.A.1.8) family. In terms of assembly, the complex is composed of two ATP-binding proteins (ModC), two transmembrane proteins (ModB) and a solute-binding protein (ModA).

Its subcellular location is the cell inner membrane. The catalysed reaction is molybdate(out) + ATP + H2O = molybdate(in) + ADP + phosphate + H(+). Part of the ABC transporter complex ModABC involved in molybdenum import. Responsible for energy coupling to the transport system. This is Molybdenum import ATP-binding protein ModC from Vibrio parahaemolyticus serotype O3:K6 (strain RIMD 2210633).